A 316-amino-acid polypeptide reads, in one-letter code: tRNA dimethylallyltransferase (316 aa).

An ATP-binding site is contributed by 12-19; that stretch reads GPTASGKT. Residue 14 to 19 participates in substrate binding; it reads TASGKT. 2 interaction with substrate tRNA regions span residues 37 to 40 and 161 to 165; these read DSAL and QRILR.

It belongs to the IPP transferase family. In terms of assembly, monomer. Mg(2+) serves as cofactor.

It carries out the reaction adenosine(37) in tRNA + dimethylallyl diphosphate = N(6)-dimethylallyladenosine(37) in tRNA + diphosphate. Catalyzes the transfer of a dimethylallyl group onto the adenine at position 37 in tRNAs that read codons beginning with uridine, leading to the formation of N6-(dimethylallyl)adenosine (i(6)A). In Idiomarina loihiensis (strain ATCC BAA-735 / DSM 15497 / L2-TR), this protein is tRNA dimethylallyltransferase.